The following is a 79-amino-acid chain: Small ribosomal subunit protein bS18B (79 aa).

The span at 1 to 11 (MPRPRKADRTP) shows a compositional bias: basic and acidic residues. Residues 1-24 (MPRPRKADRTPARQRPNPLDRDGV) form a disordered region.

It belongs to the bacterial ribosomal protein bS18 family. Part of the 30S ribosomal subunit. Forms a tight heterodimer with protein bS6.

Functionally, binds as a heterodimer with protein bS6 to the central domain of the 16S rRNA, where it helps stabilize the platform of the 30S subunit. The polypeptide is Small ribosomal subunit protein bS18B (Streptomyces coelicolor (strain ATCC BAA-471 / A3(2) / M145)).